We begin with the raw amino-acid sequence, 55 residues long: MPQLNPTPWFPIMMLSWLIFSLIIQPKLLLFTPTNPPSNKTTTTTRSNPWTWPWT.

A helical membrane pass occupies residues 10–30 (FPIMMLSWLIFSLIIQPKLLL). The tract at residues 35-55 (NPPSNKTTTTTRSNPWTWPWT) is disordered. Positions 37–55 (PSNKTTTTTRSNPWTWPWT) are enriched in low complexity.

Belongs to the ATPase protein 8 family. As to quaternary structure, component of the ATP synthase complex composed at least of ATP5F1A/subunit alpha, ATP5F1B/subunit beta, ATP5MC1/subunit c (homooctomer), MT-ATP6/subunit a, MT-ATP8/subunit 8, ATP5ME/subunit e, ATP5MF/subunit f, ATP5MG/subunit g, ATP5MK/subunit k, ATP5MJ/subunit j, ATP5F1C/subunit gamma, ATP5F1D/subunit delta, ATP5F1E/subunit epsilon, ATP5PF/subunit F6, ATP5PB/subunit b, ATP5PD/subunit d, ATP5PO/subunit OSCP. ATP synthase complex consists of a soluble F(1) head domain (subunits alpha(3) and beta(3)) - the catalytic core - and a membrane F(0) domain - the membrane proton channel (subunits c, a, 8, e, f, g, k and j). These two domains are linked by a central stalk (subunits gamma, delta, and epsilon) rotating inside the F1 region and a stationary peripheral stalk (subunits F6, b, d, and OSCP).

It localises to the mitochondrion membrane. Subunit 8, of the mitochondrial membrane ATP synthase complex (F(1)F(0) ATP synthase or Complex V) that produces ATP from ADP in the presence of a proton gradient across the membrane which is generated by electron transport complexes of the respiratory chain. ATP synthase complex consist of a soluble F(1) head domain - the catalytic core - and a membrane F(1) domain - the membrane proton channel. These two domains are linked by a central stalk rotating inside the F(1) region and a stationary peripheral stalk. During catalysis, ATP synthesis in the catalytic domain of F(1) is coupled via a rotary mechanism of the central stalk subunits to proton translocation. In vivo, can only synthesize ATP although its ATP hydrolase activity can be activated artificially in vitro. Part of the complex F(0) domain. The protein is ATP synthase F(0) complex subunit 8 of Opisthocomus hoazin (Hoatzin).